The sequence spans 135 residues: Hemoglobin subunit beta-3 (135 aa).

The Globin domain maps to 2–135 (HWTAEEKALV…VVDALSKAYQ (134 aa)). Heme b-binding residues include H57 and H81.

Belongs to the globin family. Hb 3 is a heterotetramer of two alpha and two beta-3 chains. As to expression, red blood cells (at protein level).

Involved in oxygen transport from gills to the various peripheral tissues. The sequence is that of Hemoglobin subunit beta-3 from Somniosus microcephalus (Greenland sleeper shark).